Consider the following 765-residue polypeptide: Nucleolar transcription factor 1 (765 aa).

M1 bears the N-acetylmethionine mark. Residues 1–21 (MNGEADCPTDLEMAAPKGQDR) are disordered. DNA-binding regions (HMG box) lie at residues 112–180 (PKKP…ARFR) and 196–264 (PEKP…RDYI). A Phosphothreonine modification is found at T201. S273, S336, and S364 each carry phosphoserine. Positions 298 to 362 (TKPPPNSYSL…DYEVELLRFL (65 aa)) form a DNA-binding region, HMG box 3. Over residues 370–379 (QQRVLGEEKM) the composition is skewed to basic and acidic residues. Residues 370–411 (QQRVLGEEKMLNINKKQTTSPASKKPSQEGGKGGSEKPKRPV) are disordered. S389, S412, S433, S435, S484, S495, S546, S584, and S638 each carry phosphoserine. 3 consecutive DNA-binding regions (HMG box) follow at residues 407–475 (PKRP…GGER), 482–549 (PESP…SEMR), and 568–634 (KKPP…DLWV). Positions 456-487 (YKAREAALKAQSERKPGGEREDRGKLPESPKR) are disordered. A compositionally biased stretch (basic and acidic residues) spans 457–487 (KAREAALKAQSERKPGGEREDRGKLPESPKR). Positions 546-576 (SEMRAPPAATNSSKKMKFQGEPKKPPMNGYQ) are disordered. The disordered stretch occupies residues 649-765 (ISNKRKNMTK…SGDSSDSGSN (117 aa)). Residues 664–674 (PKSSRTTLQSK) are compositionally biased toward polar residues. The segment covering 677 to 746 (SEEDDDEEEE…DDDEDEDNES (70 aa)) has biased composition (acidic residues). Over residues 747 to 765 (EGSSSSSSSSGDSSDSGSN) the composition is skewed to low complexity.

As to quaternary structure, homodimer. Part of Pol I pre-initiation complex (PIC), in which Pol I core assembles with RRN3 and promoter-bound UTBF and SL1/TIF-IB complex. Interacts with TOP2A in the context of Pol I complex. Interacts with TBP. Interacts with TAF1A. Interacts with RASL11A. Binds to IRS1 and PIK3CA. Interacts with DHX33. Interacts with PHF6. Interacts with CEBPA (isoform 1 and isoform 4). Interacts with DDX11. Interacts with NOP53. Interacts with ALKBH2. Phosphorylated and activated by PIK3CA.

The protein resides in the nucleus. It localises to the nucleolus. Its function is as follows. Recognizes the ribosomal RNA gene promoter and activates transcription mediated by RNA polymerase I through cooperative interactions with the transcription factor SL1/TIF-IB complex. It binds specifically to the upstream control element. In Mus musculus (Mouse), this protein is Nucleolar transcription factor 1 (Ubtf).